The following is a 286-amino-acid chain: Small ribosomal subunit protein uS2 (286 aa).

A disordered region spans residues 257–286 (KDNKSNKSNTINADENIKESDLIGGSNNEG).

It belongs to the universal ribosomal protein uS2 family.

The protein is Small ribosomal subunit protein uS2 of Ehrlichia ruminantium (strain Gardel).